We begin with the raw amino-acid sequence, 586 residues long: CTP synthase 2 (586 aa).

The 255-residue stretch at 300–554 (SIALVGKYTK…LAATGNLNAY (255 aa)) folds into the Glutamine amidotransferase type-1 domain. Catalysis depends on for GATase activity residues C399, H526, and E528. Residues 563 to 586 (SSDRYSDASDDSFSEPRIAELEIS) are disordered. Residues S568, S571, and S574 each carry the phosphoserine modification.

Belongs to the CTP synthase family.

It carries out the reaction UTP + L-glutamine + ATP + H2O = CTP + L-glutamate + ADP + phosphate + 2 H(+). It participates in pyrimidine metabolism; CTP biosynthesis via de novo pathway; CTP from UDP: step 2/2. Catalyzes the ATP-dependent amination of UTP to CTP with either L-glutamine or ammonia as the source of nitrogen. Constitutes the rate-limiting enzyme in the synthesis of cytosine nucleotides. This is CTP synthase 2 (CTPS2) from Homo sapiens (Human).